A 1024-amino-acid polypeptide reads, in one-letter code: Beta-galactosidase (1024 aa).

Substrate is bound by residues Asn103 and Asp202. Asp202 contributes to the Na(+) binding site. Mg(2+)-binding residues include Glu417, His419, and Glu462. Residues Glu462 and 538-541 (EYAH) contribute to the substrate site. The active-site Proton donor is the Glu462. Glu538 functions as the Nucleophile in the catalytic mechanism. Asn598 provides a ligand contact to Mg(2+). Na(+) is bound by residues Phe602 and Asn605. Substrate-binding residues include Asn605 and Trp1000.

The protein belongs to the glycosyl hydrolase 2 family. In terms of assembly, homotetramer. Mg(2+) is required as a cofactor. Requires Na(+) as cofactor.

It catalyses the reaction Hydrolysis of terminal non-reducing beta-D-galactose residues in beta-D-galactosides.. The chain is Beta-galactosidase from Shigella sonnei (strain Ss046).